We begin with the raw amino-acid sequence, 364 residues long: N-alpha-acetyltransferase 30 (364 aa).

Positions 1–18 (MAEVPPGPSSLLPPPAPA) are enriched in pro residues. 3 disordered regions span residues 1 to 21 (MAEV…AAPA), 39 to 65 (SEDE…TSAK), and 110 to 164 (EAAA…SDPA). Phosphoserine is present on residues Ser39 and Ser54. A compositionally biased stretch (acidic residues) spans 39 to 48 (SEDEEDDEEH). Over residues 126–135 (AEGHPGERPP) the composition is skewed to basic and acidic residues. Residues 152 to 164 (AAAAAAGAASDPA) show a composition bias toward low complexity. Residues Ser192, Ser198, and Ser201 each carry the phosphoserine modification. Positions 216–364 (RYVRYESELQ…DALRLKLWLR (149 aa)) constitute an N-acetyltransferase domain. Lys235 bears the N6-acetyllysine mark.

This sequence belongs to the acetyltransferase family. MAK3 subfamily. Component of the N-terminal acetyltransferase C (NatC) complex, which is composed of NAA35, NAA38 and NAA30.

Its subcellular location is the cytoplasm. The protein resides in the nucleus. The enzyme catalyses N-terminal L-methionyl-L-leucyl-[protein] + acetyl-CoA = N-terminal N(alpha)-acetyl-L-methionyl-L-leucyl-[protein] + CoA + H(+). It catalyses the reaction N-terminal L-methionyl-L-isoleucyl-[protein] + acetyl-CoA = N-terminal N(alpha)-acetyl-L-methionyl-L-isoleucyl-[protein] + CoA + H(+). The catalysed reaction is N-terminal L-methionyl-L-phenylalanyl-[protein] + acetyl-CoA = N-terminal N(alpha)-acetyl-L-methionyl-L-phenylalanyl-[protein] + CoA + H(+). It carries out the reaction N-terminal L-methionyl-L-tryptophyl-[protein] + acetyl-CoA = N-terminal N(alpha)-acetyl-L-methionyl-L-tryptophyl-[protein] + CoA + H(+). The enzyme catalyses N-terminal L-methionyl-L-tyrosyl-[protein] + acetyl-CoA = N-terminal N(alpha)-acetyl-L-methionyl-L-tyrosyl-[protein] + CoA + H(+). Its function is as follows. Catalytic subunit of the N-terminal acetyltransferase C (NatC) complex. Catalyzes acetylation of the N-terminal methionine residues of peptides beginning with Met-Leu-Ala and Met-Leu-Gly. N-terminal acetylation protects proteins from ubiquitination and degradation by the N-end rule pathway. Necessary for the lysosomal localization and function of ARL8B sugeesting that ARL8B is a NatC substrate. This is N-alpha-acetyltransferase 30 (Naa30) from Mus musculus (Mouse).